Reading from the N-terminus, the 271-residue chain is Thiamine thiazole synthase (271 aa).

NAD(+)-binding positions include Ser-39, 58–59 (ER), Gly-66, Val-130, and 158–160 (HVD). The Fe cation site is built by Asp-160 and His-175. Residue Met-225 participates in NAD(+) binding. Arg-235 is a glycine binding site.

This sequence belongs to the THI4 family. In terms of assembly, homooctamer; tetramer of dimers. It depends on Fe(2+) as a cofactor.

The catalysed reaction is hydrogen sulfide + glycine + NAD(+) = ADP-5-ethyl-4-methylthiazole-2-carboxylate + nicotinamide + 3 H2O + H(+). The protein operates within cofactor biosynthesis; thiamine diphosphate biosynthesis. Functionally, involved in the biosynthesis of the thiazole moiety of thiamine. Catalyzes the conversion of NAD and glycine to adenosine diphosphate 5-(2-hydroxyethyl)-4-methylthiazole-2-carboxylate (ADT), an adenylated thiazole intermediate, using free sulfide as a source of sulfur. In Metallosphaera sedula (strain ATCC 51363 / DSM 5348 / JCM 9185 / NBRC 15509 / TH2), this protein is Thiamine thiazole synthase.